The sequence spans 177 residues: MAAFTCTSSPPISLRSEMMIASSKTVSLSTRQMFSVGGLRTRVSLSSVSKNSRASRLRRGGIICEAQDTATGIPMVNDSTWESLVLKADEPVVVDFWAPWCGPCKMIDPIVNELAQQYTGKIKFFKLNTDDSPATPGKYGVRSIPTIMIFVKGEKKDTIIGAVPKTTLATSIDKFLQ.

A chloroplast-targeting transit peptide spans 1-64 (MAAFTCTSSP…SRLRRGGIIC (64 aa)). One can recognise a Thioredoxin domain in the interval 65-177 (EAQDTATGIP…LATSIDKFLQ (113 aa)). Residues Cys101 and Cys104 each act as nucleophile in the active site. An intrachain disulfide couples Cys101 to Cys104.

The protein belongs to the thioredoxin family. Plant M-type subfamily. Forms a complex with heterodimeric ferredoxin-thioredoxin reductase (FTR) and ferredoxin.

Its subcellular location is the plastid. The protein localises to the chloroplast. Participates in various redox reactions through the reversible oxidation of the active center dithiol to a disulfide. The M form is known to activate NADP-malate dehydrogenase. This Brassica napus (Rape) protein is Thioredoxin M-type, chloroplastic.